We begin with the raw amino-acid sequence, 236 residues long: 15,16-dihydrobiliverdin:ferredoxin oxidoreductase (236 aa).

Belongs to the HY2 family.

The catalysed reaction is 15,16-dihydrobiliverdin + oxidized 2[4Fe-4S]-[ferredoxin] = biliverdin IXalpha + reduced 2[4Fe-4S]-[ferredoxin] + 2 H(+). In terms of biological role, catalyzes the two-electron reduction of biliverdin IX-alpha at the C15 methine bridge. The polypeptide is 15,16-dihydrobiliverdin:ferredoxin oxidoreductase (pebA) (Synechococcus sp. (strain WH8020)).